The primary structure comprises 261 residues: MSLPASFDLTAEDAKLLLAANVHLGSKNVIVHNKPYVYKTRPDGVNVINIGKTWEKIVLAARTIAAIPNAADVAVCSSRTFGQRAVLKFAAHTGATPIAGRFTPGNFTNYITRSFKEPRLVIVTDPRTDAQAIKESSYVNIPVIALTDMDSPTDYVDIAIPCNNKGKHSIGLIWWLLAREVLRLRGIIPDRSTEWSVMPDLYFYRDPEEIEQNAAEDSKAEDAEEAPVADAEPDWSGETEDVDWAESGATPAAEEAAASNW.

An N-acetylserine modification is found at Ser2. A disordered region spans residues 211 to 261; that stretch reads EQNAAEDSKAEDAEEAPVADAEPDWSGETEDVDWAESGATPAAEEAAASNW. Residues 222 to 244 show a composition bias toward acidic residues; sequence DAEEAPVADAEPDWSGETEDVDW. The span at 245–261 shows a compositional bias: low complexity; the sequence is AESGATPAAEEAAASNW.

This sequence belongs to the universal ribosomal protein uS2 family. In terms of assembly, component of the small ribosomal subunit. Mature ribosomes consist of a small (40S) and a large (60S) subunit. The 40S subunit contains about 33 different proteins and 1 molecule of RNA (18S). The 60S subunit contains about 49 different proteins and 3 molecules of RNA (25S, 5.8S and 5S). Interacts with RPS21.

The protein resides in the cytoplasm. In terms of biological role, required for the assembly and/or stability of the 40S ribosomal subunit. Required for the processing of the 20S rRNA-precursor to mature 18S rRNA in a late step of the maturation of 40S ribosomal subunits. This is Small ribosomal subunit protein uS2 from Meyerozyma guilliermondii (strain ATCC 6260 / CBS 566 / DSM 6381 / JCM 1539 / NBRC 10279 / NRRL Y-324) (Yeast).